The primary structure comprises 372 residues: 4-hydroxy-3-methylbut-2-en-1-yl diphosphate synthase (flavodoxin) (372 aa).

[4Fe-4S] cluster is bound by residues C270, C273, C305, and E312.

Belongs to the IspG family. [4Fe-4S] cluster is required as a cofactor.

The catalysed reaction is (2E)-4-hydroxy-3-methylbut-2-enyl diphosphate + oxidized [flavodoxin] + H2O + 2 H(+) = 2-C-methyl-D-erythritol 2,4-cyclic diphosphate + reduced [flavodoxin]. Its pathway is isoprenoid biosynthesis; isopentenyl diphosphate biosynthesis via DXP pathway; isopentenyl diphosphate from 1-deoxy-D-xylulose 5-phosphate: step 5/6. Functionally, converts 2C-methyl-D-erythritol 2,4-cyclodiphosphate (ME-2,4cPP) into 1-hydroxy-2-methyl-2-(E)-butenyl 4-diphosphate. The protein is 4-hydroxy-3-methylbut-2-en-1-yl diphosphate synthase (flavodoxin) of Shigella boydii serotype 18 (strain CDC 3083-94 / BS512).